The primary structure comprises 539 residues: GMP synthase [glutamine-hydrolyzing] (539 aa).

The 199-residue stretch at 4–202 (KILILDFGSQ…VLQIAGAKPD (199 aa)) folds into the Glutamine amidotransferase type-1 domain. Catalysis depends on cysteine 81, which acts as the Nucleophile. Active-site residues include histidine 176 and glutamate 178. In terms of domain architecture, GMPS ATP-PPase spans 203–395 (WIMSNHIEEA…LGLPPEMVYR (193 aa)). 230–236 (SGGVDSS) is an ATP binding site.

In terms of assembly, homodimer.

The enzyme catalyses XMP + L-glutamine + ATP + H2O = GMP + L-glutamate + AMP + diphosphate + 2 H(+). The protein operates within purine metabolism; GMP biosynthesis; GMP from XMP (L-Gln route): step 1/1. Its function is as follows. Catalyzes the synthesis of GMP from XMP. The chain is GMP synthase [glutamine-hydrolyzing] from Burkholderia ambifaria (strain ATCC BAA-244 / DSM 16087 / CCUG 44356 / LMG 19182 / AMMD) (Burkholderia cepacia (strain AMMD)).